We begin with the raw amino-acid sequence, 468 residues long: Zinc finger protein 672 (468 aa).

4 consecutive C2H2-type zinc fingers follow at residues 15–37 (YSCS…ERAH), 43–65 (FRCL…RWTH), 71–93 (YICS…LGTH), and 100–123 (CPCR…VRQH). A C2H2-type 5; degenerate zinc finger spans residues 129 to 151 (HRCPLCARSFRQSALPFHLARAH). 9 consecutive C2H2-type zinc fingers follow at residues 167-189 (YHCT…SRIH), 202-224 (HRCG…LQRH), 230-252 (FKCP…QRTH), 258-280 (YACN…QRSH), 286-308 (HICA…QRSH), 314-336 (FPCP…LRTH), 342-364 (YHCE…LRNH), 370-392 (HKCP…RKTH), and 398-420 (AECT…QRSH).

Belongs to the krueppel C2H2-type zinc-finger protein family.

It is found in the nucleus. May be involved in transcriptional regulation. The sequence is that of Zinc finger protein 672 (Znf672) from Rattus norvegicus (Rat).